A 312-amino-acid polypeptide reads, in one-letter code: DNA-directed RNA polymerase subunit alpha (312 aa).

The alpha N-terminal domain (alpha-NTD) stretch occupies residues 1–226; it reads MIEFEKPNIT…EHLDIFVNLT (226 aa). The tract at residues 243-312 is alpha C-terminal domain (alpha-CTD); it reads KEKMLEMTIE…DLGLGLRKED (70 aa).

This sequence belongs to the RNA polymerase alpha chain family. In terms of assembly, homodimer. The RNAP catalytic core consists of 2 alpha, 1 beta, 1 beta' and 1 omega subunit. When a sigma factor is associated with the core the holoenzyme is formed, which can initiate transcription.

It catalyses the reaction RNA(n) + a ribonucleoside 5'-triphosphate = RNA(n+1) + diphosphate. Functionally, DNA-dependent RNA polymerase catalyzes the transcription of DNA into RNA using the four ribonucleoside triphosphates as substrates. In Lacticaseibacillus casei (strain BL23) (Lactobacillus casei), this protein is DNA-directed RNA polymerase subunit alpha.